We begin with the raw amino-acid sequence, 503 residues long: 2,3-bisphosphoglycerate-independent phosphoglycerate mutase (503 aa).

The Mn(2+) site is built by Asp-10 and Ser-60. Ser-60 acts as the Phosphoserine intermediate in catalysis. Residues His-121, 150–151 (RD), Arg-181, Arg-187, 256–259 (RPDR), and Lys-330 each bind substrate. Mn(2+)-binding residues include Asp-396, His-400, Asp-437, His-438, and His-455.

Belongs to the BPG-independent phosphoglycerate mutase family. In terms of assembly, monomer. Mn(2+) is required as a cofactor.

The enzyme catalyses (2R)-2-phosphoglycerate = (2R)-3-phosphoglycerate. It functions in the pathway carbohydrate degradation; glycolysis; pyruvate from D-glyceraldehyde 3-phosphate: step 3/5. Its function is as follows. Catalyzes the interconversion of 2-phosphoglycerate and 3-phosphoglycerate. This chain is 2,3-bisphosphoglycerate-independent phosphoglycerate mutase, found in Mycoplasmoides gallisepticum (strain R(low / passage 15 / clone 2)) (Mycoplasma gallisepticum).